Reading from the N-terminus, the 342-residue chain is N-acetyl-gamma-glutamyl-phosphate reductase (342 aa).

Cys149 is a catalytic residue.

This sequence belongs to the NAGSA dehydrogenase family. Type 1 subfamily.

It localises to the cytoplasm. The enzyme catalyses N-acetyl-L-glutamate 5-semialdehyde + phosphate + NADP(+) = N-acetyl-L-glutamyl 5-phosphate + NADPH + H(+). The protein operates within amino-acid biosynthesis; L-arginine biosynthesis; N(2)-acetyl-L-ornithine from L-glutamate: step 3/4. Catalyzes the NADPH-dependent reduction of N-acetyl-5-glutamyl phosphate to yield N-acetyl-L-glutamate 5-semialdehyde. This Cereibacter sphaeroides (strain ATCC 17023 / DSM 158 / JCM 6121 / CCUG 31486 / LMG 2827 / NBRC 12203 / NCIMB 8253 / ATH 2.4.1.) (Rhodobacter sphaeroides) protein is N-acetyl-gamma-glutamyl-phosphate reductase.